A 440-amino-acid chain; its full sequence is VGFKAGVKDYRLNYYTPDYQTKETDILAAFRMTPQPGVPPEEAGAAVAAESSTGTWTTVWTDGLTSLDRYKGRCYDLEAVPGEENQYIAYVAYPLDLFEEGSVTNLFTSIVGNVFGFKALRALRLEDLRIPPAYSKTFQGPPHGIQVERDKLNKYGRPLLGCTIKPKLGLSAKNYGRAVYECLRGGLDFTKDDENVNSQPFMRWRDRFLFVAEALYKSQAETGEIKGHYLNATAGTCEEMLKRAEFARELGAPIVMHDYLTGGFTANTTLAHYCRDNGLLLHIHRAMHAVIDRQKNHGMHFRVLAKALRLSGGDHIHAGTVVGKLEGERQVTLGFVDLLRDDYIEKDRSRGIYFTQDWVSLPGVLPVASGGIHVWHXPALTEIFGDDSVLQFGGGTLGHPWGNAPGAVANRVALEACVQARNEGRDLAREGNEVIREATK.

Position 4 is an N6,N6,N6-trimethyllysine (lysine 4). Residues asparagine 113 and threonine 163 each coordinate substrate. Lysine 165 acts as the Proton acceptor in catalysis. Lysine 167 serves as a coordination point for substrate. 3 residues coordinate Mg(2+): lysine 191, aspartate 193, and glutamate 194. Lysine 191 carries the post-translational modification N6-carboxylysine. Residue histidine 284 is the Proton acceptor of the active site. Substrate is bound by residues arginine 285, histidine 317, and serine 369.

This sequence belongs to the RuBisCO large chain family. Type I subfamily. In terms of assembly, heterohexadecamer of 8 large chains and 8 small chains; disulfide-linked. The disulfide link is formed within the large subunit homodimers. It depends on Mg(2+) as a cofactor. In terms of processing, the disulfide bond which can form in the large chain dimeric partners within the hexadecamer appears to be associated with oxidative stress and protein turnover.

It is found in the plastid. It localises to the chloroplast. It carries out the reaction 2 (2R)-3-phosphoglycerate + 2 H(+) = D-ribulose 1,5-bisphosphate + CO2 + H2O. It catalyses the reaction D-ribulose 1,5-bisphosphate + O2 = 2-phosphoglycolate + (2R)-3-phosphoglycerate + 2 H(+). In terms of biological role, ruBisCO catalyzes two reactions: the carboxylation of D-ribulose 1,5-bisphosphate, the primary event in carbon dioxide fixation, as well as the oxidative fragmentation of the pentose substrate in the photorespiration process. Both reactions occur simultaneously and in competition at the same active site. This chain is Ribulose bisphosphate carboxylase large chain, found in Ptychomitrium gardneri (Gardner's ptychomitrium moss).